The chain runs to 716 residues: MMYIRQRKETKPIEVSEDFPSPKEDVKLEKKLPSGCASGRFWKILSSAVGGTVALCIGLLTSVYLATLHENDLWFSNIKEVEREISFRTECGLYYSYYKQMLQAPTLLQGFHGLIYDNKTESMRTINLLQRMNIYQEVFLSVLYRVLPIQKYLEPVYFYIYTLFGLQAVYVTALYITSWLLSGTWLSGLLAALWYVTNRIDTTRVEFTIPLRENWALPFFAIQIAAITYFLRPNLQPLSERLTLLAIFVSTFLFSLTWQFNQFMMLLQALVLFILDSLDMLPAMKATWLYGIQISCLLLVCTLQFFNSMILGSLLISFNLSVLIVRKLQKNLKTGSFLTRIWKLLLHLLLVFCLTLFLNNIIKKVLNLKSDEHIFKFLKAKFGFGATRDFDANLYLCEEAFGLLPLNTFQRLSETLLFYAYMFVLVVTVVTASVVAFHNLSDSTSLKSMDQTRKRAVDLKPEAAYNLIHTILFGVLALSTMRMKYLWTSHMCVFASFGLCSSEVWELLLRLVHLCNPKRIWVLRYLVPVLTLLYLCYKSWPGVMDELSELKEFYDPDTVELMTWINSNTPRKAVFAGSMQLLAGVKLCTGRTLTNHPHYEDKSLRERTQAVYQIYAKRSPEEVHALLRSFGTDFVILEDSICYERRHHRGCRLRDLLDVANGHEMDGPGESDPDLRPADHPRFCEEIKRNLPSYAAHFTRVFQNKTFHVYKLSRNK.

The Cytoplasmic portion of the chain corresponds to 1–43 (MMYIRQRKETKPIEVSEDFPSPKEDVKLEKKLPSGCASGRFWK). The chain crosses the membrane as a helical span at residues 44–64 (ILSSAVGGTVALCIGLLTSVY). The Lumenal portion of the chain corresponds to 65 to 154 (LATLHENDLW…RVLPIQKYLE (90 aa)). N118 carries N-linked (GlcNAc...) asparagine glycosylation. Residues 155–182 (PVYFYIYTLFGLQAVYVTALYITSWLLS) traverse the membrane as a helical segment. Residues 183–184 (GT) lie on the Cytoplasmic side of the membrane. The segment at residues 185 to 197 (WLSGLLAALWYVT) is an intramembrane region (name=3). Residues 198–215 (NRIDTTRVEFTIPLRENW) lie on the Cytoplasmic side of the membrane. The segment at residues 216 to 230 (ALPFFAIQIAAITYF) is an intramembrane region (name=4). The Cytoplasmic portion of the chain corresponds to 231 to 239 (LRPNLQPLS). The helical transmembrane segment at 240-256 (ERLTLLAIFVSTFLFSL) threads the bilayer. Topologically, residues 257–262 (TWQFNQ) are lumenal. A helical transmembrane segment spans residues 263-279 (FMMLLQALVLFILDSLD). The Cytoplasmic portion of the chain corresponds to 280 to 289 (MLPAMKATWL). A helical membrane pass occupies residues 290-306 (YGIQISCLLLVCTLQFF). Residues 307–308 (NS) are Lumenal-facing. A helical membrane pass occupies residues 309–323 (MILGSLLISFNLSVL). Topologically, residues 324–338 (IVRKLQKNLKTGSFL) are cytoplasmic. Residues 339–359 (TRIWKLLLHLLLVFCLTLFLN) form a helical membrane-spanning segment. Residues 360–414 (NIIKKVLNLKSDEHIFKFLKAKFGFGATRDFDANLYLCEEAFGLLPLNTFQRLSE) are Lumenal-facing. A helical membrane pass occupies residues 415–437 (TLLFYAYMFVLVVTVVTASVVAF). Topologically, residues 438–465 (HNLSDSTSLKSMDQTRKRAVDLKPEAAY) are cytoplasmic. Residues 466–485 (NLIHTILFGVLALSTMRMKY) form a helical membrane-spanning segment. The Lumenal portion of the chain corresponds to 486–487 (LW). Residues 488-499 (TSHMCVFASFGL) form a helical membrane-spanning segment. Residues 500–522 (CSSEVWELLLRLVHLCNPKRIWV) lie on the Cytoplasmic side of the membrane. A helical membrane pass occupies residues 523-539 (LRYLVPVLTLLYLCYKS). Residues 540-716 (WPGVMDELSE…FHVYKLSRNK (177 aa)) are Lumenal-facing. An N-linked (GlcNAc...) asparagine glycan is attached at N704.

It belongs to the dpy-19 family.

It localises to the endoplasmic reticulum membrane. It carries out the reaction L-tryptophyl-[protein] + a di-trans,poly-cis-dolichyl beta-D-mannosyl phosphate = C-alpha-D-mannosyl-L-tryptophyl-[protein] + a di-trans,poly-cis-dolichyl phosphate + H(+). It participates in protein modification; protein glycosylation. Functionally, C-mannosyltransferase that mediates C-mannosylation of tryptophan residues on target proteins. The reaction occurs on the luminal side of the endoplasmic reticulum and involves the transfer of a mannose unit from a dolichylphosphate mannose (Dol-P-Man) donor to an acceptor protein containing a WxxW or WxxC consensus sequence. C-mannosylates RSPO1, a Wnt signaling regulator, preferentially at the first Trp residue in the sequence WxxW. C-mannosylates the netrin receptor UNC5A, preferentially at the third tryptophan of WxxWxxWxxC sequence. This chain is Protein C-mannosyl-transferase DPY19L3 (Dpy19l3), found in Mus musculus (Mouse).